A 720-amino-acid polypeptide reads, in one-letter code: MKKRLLLPLFAALCLSQIAHADEGMWLMQQLGRKYAQMKERGLKMKEYDLYNPNGTSLKDAVVLFDGGCTGEVVSDRGLVLTNHHCGYDMIQAHSTLEHNYLENGFWAMREADELPNKDISVVFIDKIEDVTDYVKKELKAIKDPNSMDYLSPKYLQKLADKKAGKNFSAKNPGLSVEIKAFYGGNLYLMFTKKTYTDVRLVGAPPSSIGKFGADTDNWIWPRHTGDFSIFRIYADKNGNPAPYSEDNVPLKPKRFFNISLGGVQENDYAMIMGFPGTTHRYFTASEVDEWKSIDNDIRIRMRDIRQGVMLREMLADPQIKIMYSAKYAASQNAYKRAIGANWAIKTRGLRQNKQAMQDRLIAWGAKQGTPRYEEAVHEIDATVAKRADLRRRYWMIEEGIIRGIEFARSPIPTEDETKALQGNDASARKEAIDKIRTRYSKFANKDYSAEVDKKVAVAMLTEYLKEIPYENLPLHLRLVKDRFAGDVQAYVDDIFARSVFGSEAQFDAFAAVPSVEKLAEDPMVLFASSVFDEYRKLYNELRPYDDPILRAQRTYIAGLLEMDGDQDQFPDANLTLRFTYGQVKGYSPRDNVYYGHQTTLDGVMEKEDPDNWEFVVDPKLKAVYERKDFGRYADRSGRMPVAFCATTHTTGGNSGSPVMNANGELIGLNFDRNWEGVGGDIQYLADYQRSIIVDIRYVLLVIDKVGGCQRLLDEMNIVP.

The first 21 residues, 1–21, serve as a signal peptide directing secretion; the sequence is MKKRLLLPLFAALCLSQIAHA. C69 and C86 are disulfide-bonded. Residues H85, D227, and S655 each act as charge relay system in the active site.

It belongs to the peptidase S46 family. As to quaternary structure, homodimer.

Its subcellular location is the cell surface. With respect to regulation, enzyme activity is completely blocked by diisopropyl-fluorophosphates, moderately by phenylmethylsulfonyl fluoride (PMSF) and 4-(2-methyl)benzenesulfonyl fluoride, and slightly by pepstatin in vitro. Its function is as follows. Catalyzes the removal of dipeptides from the N-terminus of oligopeptides. Shows a strict specificity for acidic residues (Asp or Glu) in the P1 position, and has a hydrophobic residue preference at the P2 position. Preferentially cleaves the synthetic substrate Leu-Asp-methylcoumaryl-7-amide (Leu-Asp-MCA) as compared to Leu-Glu-MCA. Is involved in amino acid metabolism and bacterial growth of asaccharolytic P.gingivalis, that utilizes amino acids from extracellular proteinaceous nutrients as energy and carbon sources. The sequence is that of Asp/Glu-specific dipeptidyl-peptidase from Porphyromonas gingivalis (strain ATCC 33277 / DSM 20709 / CIP 103683 / JCM 12257 / NCTC 11834 / 2561).